A 103-amino-acid polypeptide reads, in one-letter code: Pyrimidine/purine nucleoside phosphorylase (103 aa).

The protein belongs to the nucleoside phosphorylase PpnP family.

It carries out the reaction a purine D-ribonucleoside + phosphate = a purine nucleobase + alpha-D-ribose 1-phosphate. The catalysed reaction is adenosine + phosphate = alpha-D-ribose 1-phosphate + adenine. It catalyses the reaction cytidine + phosphate = cytosine + alpha-D-ribose 1-phosphate. The enzyme catalyses guanosine + phosphate = alpha-D-ribose 1-phosphate + guanine. It carries out the reaction inosine + phosphate = alpha-D-ribose 1-phosphate + hypoxanthine. The catalysed reaction is thymidine + phosphate = 2-deoxy-alpha-D-ribose 1-phosphate + thymine. It catalyses the reaction uridine + phosphate = alpha-D-ribose 1-phosphate + uracil. The enzyme catalyses xanthosine + phosphate = alpha-D-ribose 1-phosphate + xanthine. Catalyzes the phosphorolysis of diverse nucleosides, yielding D-ribose 1-phosphate and the respective free bases. Can use uridine, adenosine, guanosine, cytidine, thymidine, inosine and xanthosine as substrates. Also catalyzes the reverse reactions. The polypeptide is Pyrimidine/purine nucleoside phosphorylase (Laribacter hongkongensis (strain HLHK9)).